Here is a 217-residue protein sequence, read N- to C-terminus: Orotate phosphoribosyltransferase (217 aa).

Lys26 provides a ligand contact to 5-phospho-alpha-D-ribose 1-diphosphate. 34 to 35 (FF) is a binding site for orotate. Residues 72–73 (YK), Arg99, Lys100, Lys103, His105, and 124–132 (DDVITAGTA) contribute to the 5-phospho-alpha-D-ribose 1-diphosphate site. Orotate contacts are provided by Thr128 and Arg156.

This sequence belongs to the purine/pyrimidine phosphoribosyltransferase family. PyrE subfamily. In terms of assembly, homodimer. It depends on Mg(2+) as a cofactor.

It catalyses the reaction orotidine 5'-phosphate + diphosphate = orotate + 5-phospho-alpha-D-ribose 1-diphosphate. Its pathway is pyrimidine metabolism; UMP biosynthesis via de novo pathway; UMP from orotate: step 1/2. In terms of biological role, catalyzes the transfer of a ribosyl phosphate group from 5-phosphoribose 1-diphosphate to orotate, leading to the formation of orotidine monophosphate (OMP). The chain is Orotate phosphoribosyltransferase from Aeromonas salmonicida (strain A449).